Here is a 431-residue protein sequence, read N- to C-terminus: GTPase Obg (431 aa).

Residues 1 to 158 (MFVDQVKVDV…LTIRMELKVL (158 aa)) form the Obg domain. Residues 159–335 (ADVGLVGFPS…LLAKTADLLD (177 aa)) form the OBG-type G domain. GTP is bound by residues 165–172 (GFPSVGKS), 190–194 (FTTLV), 212–215 (DLPG), 282–285 (TKMD), and 316–318 (SSI). Positions 172 and 192 each coordinate Mg(2+). The region spanning 353–431 (YTTEADADFS…ILDYSFQFMD (79 aa)) is the OCT domain.

It belongs to the TRAFAC class OBG-HflX-like GTPase superfamily. OBG GTPase family. As to quaternary structure, monomer. The cofactor is Mg(2+).

The protein resides in the cytoplasm. An essential GTPase which binds GTP, GDP and possibly (p)ppGpp with moderate affinity, with high nucleotide exchange rates and a fairly low GTP hydrolysis rate. Plays a role in control of the cell cycle, stress response, ribosome biogenesis and in those bacteria that undergo differentiation, in morphogenesis control. The protein is GTPase Obg of Lactiplantibacillus plantarum (strain ATCC BAA-793 / NCIMB 8826 / WCFS1) (Lactobacillus plantarum).